The sequence spans 153 residues: Arginine repressor (153 aa).

Belongs to the ArgR family.

It localises to the cytoplasm. The protein operates within amino-acid biosynthesis; L-arginine biosynthesis [regulation]. Its function is as follows. Regulates arginine biosynthesis genes. The sequence is that of Arginine repressor from Clostridium tetani (strain Massachusetts / E88).